We begin with the raw amino-acid sequence, 167 residues long: Protein-export protein SecB (167 aa).

It belongs to the SecB family. In terms of assembly, homotetramer, a dimer of dimers. One homotetramer interacts with 1 SecA dimer.

It localises to the cytoplasm. In terms of biological role, one of the proteins required for the normal export of preproteins out of the cell cytoplasm. It is a molecular chaperone that binds to a subset of precursor proteins, maintaining them in a translocation-competent state. It also specifically binds to its receptor SecA. The protein is Protein-export protein SecB of Wolbachia pipientis subsp. Culex pipiens (strain wPip).